Consider the following 499-residue polypeptide: Ribose import ATP-binding protein RbsA (499 aa).

ABC transporter domains follow at residues 3–240 (VEMS…VGRE) and 250–494 (LEPG…TGGD). Residue 35–42 (GENGAGKS) coordinates ATP.

It belongs to the ABC transporter superfamily. Ribose importer (TC 3.A.1.2.1) family. As to quaternary structure, the complex is composed of an ATP-binding protein (RbsA), two transmembrane proteins (RbsC) and a solute-binding protein (RbsB).

It localises to the cell membrane. It catalyses the reaction D-ribose(out) + ATP + H2O = D-ribose(in) + ADP + phosphate + H(+). Part of the ABC transporter complex RbsABC involved in ribose import. Responsible for energy coupling to the transport system. The polypeptide is Ribose import ATP-binding protein RbsA (Shouchella clausii (strain KSM-K16) (Alkalihalobacillus clausii)).